The sequence spans 466 residues: Ribosome biogenesis protein YTM1 (466 aa).

The interval Ile11–Arg99 is ubiquitin-like (UBL) domain. The segment at Ser109–Lys466 is sufficient for interaction with ERB1 and association with 66S pre-ribosomes. WD repeat units follow at residues Pro124–Tyr163, Gly165–Glu203, Gly219–Ile258, Gly296–Thr336, Thr338–Gln377, Gly384–Thr424, and Ser431–Lys466.

This sequence belongs to the WD repeat WDR12/YTM1 family. In terms of assembly, component of the NOP7 complex, composed of ERB1, NOP7 and YTM1. The complex is held together by ERB1, which interacts with NOP7 via its N-terminal domain and with YTM1 via a high-affinity interaction between the seven-bladed beta-propeller domains of the 2 proteins. The NOP7 complex associates with the 66S pre-ribosome. Interacts (via UBL domain) with MDN1 (via VWFA/MIDAS domain).

Its subcellular location is the nucleus. The protein localises to the nucleolus. It is found in the nucleoplasm. Its function is as follows. Component of the NOP7 complex, which is required for maturation of the 25S and 5.8S ribosomal RNAs and formation of the 60S ribosome. The chain is Ribosome biogenesis protein YTM1 from Candida albicans (strain SC5314 / ATCC MYA-2876) (Yeast).